Reading from the N-terminus, the 81-residue chain is GAMMA-ctenitoxin-Pn1a (81 aa).

Residues 1 to 16 form the signal peptide; the sequence is MKVAIVFLSLLVLAFA. Residues 17–34 constitute a propeptide that is removed on maturation; sequence SESIEENREEFPVEESAR. Intrachain disulfides connect C35/C49, C42/C55, C46/C81, C48/C65, and C57/C63.

The protein belongs to the neurotoxin 03 (Tx2) family. 05 subfamily. As to expression, expressed by the venom gland.

It is found in the secreted. Its function is as follows. This insecticidal neurotoxin targets two types of channels/receptors. It reversibly inhibits the N-methyl-D-aspartate (NMDA)-subtype of ionotropic glutamate receptor (GRIN). It inhibits glutamate uptake from rat brain synaptosomes, and blocks GRIN in hippocampal slices. It also acts on sodium channels of both insects and mammals. On sodium channel insects, it strongly slows down channel inactivation (EC(50)=212.5 nM) and causes an increase (105%) in peak amplitude (at 1 uM) of B.germanica sodium channel (Nav), whereas it inhibits all mammalien sodium channels tested with the following order of potency: Nav1.3/SCN3A (IC(50)=1.5 uM) &gt; Nav1.6/SCN8A &gt; Nav1.5/SCN5A &gt; Nav1.4/SCN4A &gt;= Nav1.2/SCN2A. In vivo, it is highly toxic to house fly (Musca domestica), cockroach (Periplaneta americana), and cricket (Acheta domesticus). In different rat pain models (induced by PGE2, carrageenan or glutamate), it shows antinociceptive effect that may be related to an inhibitory activity on the glutamatergic system. This chain is GAMMA-ctenitoxin-Pn1a, found in Phoneutria nigriventer (Brazilian armed spider).